Here is a 33-residue protein sequence, read N- to C-terminus: MLFTVAWASLAAMFSFSIAMVVWGRNGDGTLNF.

A helical transmembrane segment spans residues 2–22; it reads LFTVAWASLAAMFSFSIAMVV.

The protein belongs to the PetN family. The 4 large subunits of the cytochrome b6-f complex are cytochrome b6, subunit IV (17 kDa polypeptide, PetD), cytochrome f and the Rieske protein, while the 4 small subunits are PetG, PetL, PetM and PetN. The complex functions as a dimer.

It localises to the cellular thylakoid membrane. Component of the cytochrome b6-f complex, which mediates electron transfer between photosystem II (PSII) and photosystem I (PSI), cyclic electron flow around PSI, and state transitions. This Parasynechococcus marenigrum (strain WH8102) protein is Cytochrome b6-f complex subunit 8.